A 732-amino-acid chain; its full sequence is Elongation factor 2 (732 aa).

In terms of domain architecture, tr-type G spans 19-260 (ERIRNIGIAA…MVVKHLPNPI (242 aa)). Residues 28–35 (AHIDHGKT), 94–98 (DTPGH), and 148–151 (NKVD) each bind GTP. His-597 is subject to Diphthamide.

Belongs to the TRAFAC class translation factor GTPase superfamily. Classic translation factor GTPase family. EF-G/EF-2 subfamily.

It is found in the cytoplasm. Its function is as follows. Catalyzes the GTP-dependent ribosomal translocation step during translation elongation. During this step, the ribosome changes from the pre-translocational (PRE) to the post-translocational (POST) state as the newly formed A-site-bound peptidyl-tRNA and P-site-bound deacylated tRNA move to the P and E sites, respectively. Catalyzes the coordinated movement of the two tRNA molecules, the mRNA and conformational changes in the ribosome. The sequence is that of Elongation factor 2 (fusA) from Pyrococcus abyssi (strain GE5 / Orsay).